A 38-amino-acid polypeptide reads, in one-letter code: Photosystem II reaction center protein X (38 aa).

Residues 9–29 form a helical membrane-spanning segment; it reads ISSLTAGGLVVLTIAVALIVI.

It belongs to the PsbX family. Type 1 subfamily. In terms of assembly, PSII is composed of 1 copy each of membrane proteins PsbA, PsbB, PsbC, PsbD, PsbE, PsbF, PsbH, PsbI, PsbJ, PsbK, PsbL, PsbM, PsbT, PsbX, PsbY, PsbZ, Psb30/Ycf12, at least 3 peripheral proteins of the oxygen-evolving complex and a large number of cofactors. It forms dimeric complexes.

Its subcellular location is the plastid. It is found in the chloroplast thylakoid membrane. In terms of biological role, involved in the binding and/or turnover of quinones at the Q(B) site of photosystem II (PSII). PSII is a light-driven water plastoquinone oxidoreductase, using light energy to abstract electrons from H(2)O, generating a proton gradient subsequently used for ATP formation. This Trieres chinensis (Marine centric diatom) protein is Photosystem II reaction center protein X.